A 365-amino-acid chain; its full sequence is tRNA N6-adenosine threonylcarbamoyltransferase (365 aa).

H119 and H123 together coordinate Fe cation. Substrate-binding positions include 141-145 (LVSGG), D174, G187, and N288. D316 provides a ligand contact to Fe cation.

Belongs to the KAE1 / TsaD family. The cofactor is Fe(2+).

Its subcellular location is the cytoplasm. The catalysed reaction is L-threonylcarbamoyladenylate + adenosine(37) in tRNA = N(6)-L-threonylcarbamoyladenosine(37) in tRNA + AMP + H(+). In terms of biological role, required for the formation of a threonylcarbamoyl group on adenosine at position 37 (t(6)A37) in tRNAs that read codons beginning with adenine. Is involved in the transfer of the threonylcarbamoyl moiety of threonylcarbamoyl-AMP (TC-AMP) to the N6 group of A37, together with TsaE and TsaB. TsaD likely plays a direct catalytic role in this reaction. The chain is tRNA N6-adenosine threonylcarbamoyltransferase from Rhizobium johnstonii (strain DSM 114642 / LMG 32736 / 3841) (Rhizobium leguminosarum bv. viciae).